The following is a 251-amino-acid chain: Arginine and glutamate-rich protein 1-A (251 aa).

Basic residues predominate over residues Met-1–Gly-48. A necessary and sufficient for RNA binding region spans residues Met-1–Arg-53. 2 disordered regions span residues Met-1–Arg-92 and Arg-215–Glu-251. Composition is skewed to basic and acidic residues over residues Ser-49–Met-63, Arg-71–Arg-92, and Arg-215–Lys-231. Positions Gly-54–Glu-251 are necessary and sufficient for transcriptional regulation.

It belongs to the ARGLU1 family.

Its subcellular location is the nucleus. It is found in the nucleus speckle. It localises to the chromosome. Dual function regulator of gene expression; regulator of transcription and modulator of alternative splicing. General coactivator of nuclear receptor-induced gene expression. This Danio rerio (Zebrafish) protein is Arginine and glutamate-rich protein 1-A (arglu1a).